Here is a 757-residue protein sequence, read N- to C-terminus: LPS-assembly protein LptD (757 aa).

An N-terminal signal peptide occupies residues 1–21 (MRRLIPIAITGSLLWGAAVQA).

Belongs to the LptD family. In terms of assembly, component of the lipopolysaccharide transport and assembly complex. Interacts with LptE and LptA.

It localises to the cell outer membrane. In terms of biological role, together with LptE, is involved in the assembly of lipopolysaccharide (LPS) at the surface of the outer membrane. This Alkalilimnicola ehrlichii (strain ATCC BAA-1101 / DSM 17681 / MLHE-1) protein is LPS-assembly protein LptD.